Reading from the N-terminus, the 158-residue chain is Ribosome maturation factor RimP (158 aa).

This sequence belongs to the RimP family.

The protein localises to the cytoplasm. Required for maturation of 30S ribosomal subunits. This is Ribosome maturation factor RimP from Lactobacillus gasseri (strain ATCC 33323 / DSM 20243 / BCRC 14619 / CIP 102991 / JCM 1131 / KCTC 3163 / NCIMB 11718 / NCTC 13722 / AM63).